The sequence spans 585 residues: Glycerol-3-phosphate acyltransferase 1 (585 aa).

3 helical membrane-spanning segments follow: residues 126-146, 334-354, and 356-376; these read FFPY…AILL, TPLA…LAVF, and ISVG…MSGV. The HXXXXD motif signature appears at 403–408; it reads HRTLLD.

Belongs to the GPAT/DAPAT family. As to expression, highly expressed in developing siliques and flower buds. Weakly or not expressed in roots, seedlings and leaves.

The protein localises to the membrane. It is found in the mitochondrion. It carries out the reaction sn-glycerol 3-phosphate + an acyl-CoA = a 1-acyl-sn-glycero-3-phosphate + CoA. The protein operates within phospholipid metabolism; CDP-diacylglycerol biosynthesis; CDP-diacylglycerol from sn-glycerol 3-phosphate: step 1/3. In terms of biological role, esterifies acyl-group from acyl-ACP to the sn-1 position of glycerol-3-phosphate, an essential step in glycerolipid biosynthesis. Involved in pollen development, by being required for tapetum differentiation and male fertility. In addition to the sporophytic effect, it also exerts a gametophytic effect on pollen performance. In Arabidopsis thaliana (Mouse-ear cress), this protein is Glycerol-3-phosphate acyltransferase 1 (GPAT1).